We begin with the raw amino-acid sequence, 37 residues long: Albumin-2 (37 aa).

The stretch at 6-37 (IANFSVLNXEAYLFINDKYVLLDYAPGTXNDK) is one Hemopexin repeat.

Dimer. Expressed in seeds (at protein level).

The protein resides in the cytoplasm. Its subcellular location is the cytosol. Its function is as follows. Binds hemin and thiamine. This chain is Albumin-2, found in Lens culinaris (Lentil).